The following is a 306-amino-acid chain: Porphobilinogen deaminase (306 aa).

An S-(dipyrrolylmethanemethyl)cysteine modification is found at Cys-240.

Belongs to the HMBS family. Monomer. Requires dipyrromethane as cofactor.

The catalysed reaction is 4 porphobilinogen + H2O = hydroxymethylbilane + 4 NH4(+). It functions in the pathway porphyrin-containing compound metabolism; protoporphyrin-IX biosynthesis; coproporphyrinogen-III from 5-aminolevulinate: step 2/4. Tetrapolymerization of the monopyrrole PBG into the hydroxymethylbilane pre-uroporphyrinogen in several discrete steps. The chain is Porphobilinogen deaminase from Thiobacillus denitrificans (strain ATCC 25259 / T1).